The primary structure comprises 158 residues: Transcription elongation factor GreA (158 aa).

The stretch at 47 to 68 forms a coiled coil; it reads AEYDAAKEAQGLLELKIKKMEE.

It belongs to the GreA/GreB family.

Its function is as follows. Necessary for efficient RNA polymerase transcription elongation past template-encoded arresting sites. The arresting sites in DNA have the property of trapping a certain fraction of elongating RNA polymerases that pass through, resulting in locked ternary complexes. Cleavage of the nascent transcript by cleavage factors such as GreA or GreB allows the resumption of elongation from the new 3'terminus. GreA releases sequences of 2 to 3 nucleotides. This chain is Transcription elongation factor GreA, found in Flavobacterium psychrophilum (strain ATCC 49511 / DSM 21280 / CIP 103535 / JIP02/86).